The sequence spans 65 residues: uncharacterized protein (65 aa).

Residues 24–65 (NNNNNNNNNNNNNNNNNNNNNNNNNNNNNNNKNNKNNNKNND) form a disordered region.

This is an uncharacterized protein from Dictyostelium discoideum (Social amoeba).